The following is a 117-amino-acid chain: Ribosome-binding factor A (117 aa).

Belongs to the RbfA family. As to quaternary structure, monomer. Binds 30S ribosomal subunits, but not 50S ribosomal subunits or 70S ribosomes.

The protein resides in the cytoplasm. Its function is as follows. One of several proteins that assist in the late maturation steps of the functional core of the 30S ribosomal subunit. Associates with free 30S ribosomal subunits (but not with 30S subunits that are part of 70S ribosomes or polysomes). Required for efficient processing of 16S rRNA. May interact with the 5'-terminal helix region of 16S rRNA. In Leptospira interrogans serogroup Icterohaemorrhagiae serovar Lai (strain 56601), this protein is Ribosome-binding factor A.